Consider the following 604-residue polypeptide: Glutamine--fructose-6-phosphate aminotransferase [isomerizing] (604 aa).

Residue cysteine 2 is the Nucleophile; for GATase activity of the active site. One can recognise a Glutamine amidotransferase type-2 domain in the interval 2-216 (CGIVGYVGFR…DGDVVRLTRE (215 aa)). SIS domains are found at residues 281-420 (LALD…GRGA) and 453-594 (VAEK…VDQP). The active-site For Fru-6P isomerization activity is lysine 599.

In terms of assembly, homodimer.

It localises to the cytoplasm. It catalyses the reaction D-fructose 6-phosphate + L-glutamine = D-glucosamine 6-phosphate + L-glutamate. Functionally, catalyzes the first step in hexosamine metabolism, converting fructose-6P into glucosamine-6P using glutamine as a nitrogen source. The protein is Glutamine--fructose-6-phosphate aminotransferase [isomerizing] of Thermus thermophilus (strain ATCC 27634 / DSM 579 / HB8).